The primary structure comprises 62 residues: Small ribosomal subunit protein bS21 (62 aa).

Basic and acidic residues predominate over residues 43–52 (VKKKLKSEAA). The segment at 43–62 (VKKKLKSEAARKRKNRRRFK) is disordered. A compositionally biased stretch (basic residues) spans 53 to 62 (RKRKNRRRFK).

It belongs to the bacterial ribosomal protein bS21 family.

This is Small ribosomal subunit protein bS21 from Lactiplantibacillus plantarum (strain ATCC BAA-793 / NCIMB 8826 / WCFS1) (Lactobacillus plantarum).